The sequence spans 484 residues: Serine/arginine-rich splicing factor 11 (484 aa).

Residues 1–33 (MSNTTVVPSTAGPGPSGGPGGGGGGGGGGGGTE) are disordered. Residue Ser-2 is modified to N-acetylserine. Over residues 14–32 (GPSGGPGGGGGGGGGGGGT) the composition is skewed to gly residues. Residues 33 to 113 (EVIQVTNVSP…ALIVVPYAEG (81 aa)) form the RRM domain. Lys-197 is covalently cross-linked (Glycyl lysine isopeptide (Lys-Gly) (interchain with G-Cter in SUMO2)). Ser-207 bears the Phosphoserine mark. A Glycyl lysine isopeptide (Lys-Gly) (interchain with G-Cter in SUMO2) cross-link involves residue Lys-211. Ser-212 carries the post-translational modification Phosphoserine. The disordered stretch occupies residues 233-484 (ISAAIEPDKK…HHEEDMDMSD (252 aa)). Residues 244 to 308 (EKRRHSRSRS…ERGRRSRSTS (65 aa)) show a composition bias toward basic residues. A run of 10 repeats spans residues 247–255 (RHSRSRSRS), 258–265 (RRTPSSSR), 267–274 (RRSRSRSR), 275–282 (RRSHSKSR), 285–292 (RRSKSPRR), 293–300 (RRSHSRER), 302–309 (RRSRSTSK), 321–328 (KRSKTPPK), 334–341 (RRSRSASR), and 346–353 (RRSRSGTR). Residues 247–353 (RHSRSRSRSR…RRRRSRSGTR (107 aa)) are 10 X 8 AA approximate repeats of R-R-S-R-S-R-S-R. Over residues 309–320 (KTRDKKKEDKEK) the composition is skewed to basic and acidic residues. The residue at position 323 (Ser-323) is a Phosphoserine. Thr-325 carries the post-translational modification Phosphothreonine. Positions 334–379 (RRSRSASRERRRRRSRSGTRSPKKPRSPKRKLSRSPSPRRHKKEKK) are enriched in basic residues. 3 stretches are compositionally biased toward basic and acidic residues: residues 380-395 (KDKD…ERST), 402-424 (KDKE…VTRD), and 433-478 (DSEK…HHEE). Phosphoserine occurs at positions 414 and 434. Thr-447 is modified (phosphothreonine). Ser-449, Ser-456, Ser-464, and Ser-483 each carry phosphoserine.

The protein belongs to the splicing factor SR family. Interacts with PUF60.

It localises to the nucleus. May function in pre-mRNA splicing. This is Serine/arginine-rich splicing factor 11 (SRSF11) from Homo sapiens (Human).